Reading from the N-terminus, the 157-residue chain is MVKRVSKEEMDALERSCSQPFEEERFLIVSGTKWCGNNNIAANYSDLGFLEADKCCRDHDHCDHIASGETKYGLENKGLFTILNCDCDEAFDHCLKEISNNVTTDIRQKGGAENVWRFYFQWYNANCYRLYCKDEKSARDEACTNQYAVVKKNFTVQ.

Trp34 and Gly36 together coordinate Ca(2+). 5 disulfides stabilise this stretch: Cys35–Cys56, Cys55–Cys94, Cys62–Cys87, Cys85–Cys127, and Cys132–Cys143. Asn43 carries N-linked (GlcNAc...) asparagine glycosylation. The active site involves His59. Position 60 (Asp60) interacts with Ca(2+). Residue Asp88 is part of the active site. Asn101 is a glycosylation site (N-linked (GlcNAc...) asparagine). The propeptide at Asp134–Arg139 is removed in mature form. N-linked (GlcNAc...) asparagine glycosylation occurs at Asn153.

This sequence belongs to the phospholipase A2 family. Group III subfamily. As to quaternary structure, heterodimer composed of a small subunit and a large subunit; disulfide-linked. Ca(2+) is required as a cofactor. In terms of tissue distribution, expressed by the venom gland.

It is found in the secreted. It carries out the reaction a 1,2-diacyl-sn-glycero-3-phosphocholine + H2O = a 1-acyl-sn-glycero-3-phosphocholine + a fatty acid + H(+). In terms of biological role, scorpion venom phospholipase A2 (PLA2) that is lethal to crickets and crustaceae. Causes inflammation in mice and lysis of human erythrocytes. Has a mild anticoagulant effect on human platelets. PLA2 catalyzes the calcium-dependent hydrolysis of the 2-acyl groups in 3-sn-phosphoglycerides. The polypeptide is Phospholipase A2 phaiodactylipin (Anuroctonus phaiodactylus (Mafia scorpion)).